The following is a 165-amino-acid chain: Transcription factor TCP16 (165 aa).

Polar residues predominate over residues 1–11; sequence MDSKNGINNSQ. Disordered stretches follow at residues 1–21 and 146–165; these read MDSK…KDRH and GNAT…TTTV. A compositionally biased stretch (basic residues) spans 12 to 21; that stretch reads KARRTPKDRH. Residues 17-71 form the TCP domain; that stretch reads PKDRHLKIGGRDRRIRIPPSVAPQLFRLTKELGFKTDGETVSWLLQNAEPAIFAA. The segment covering 148–165 has biased composition (low complexity); the sequence is ATASDTTSAATTTATTTV.

Mostly in anther in young buds.

It localises to the nucleus. Functionally, required during early processes in pollen development. The polypeptide is Transcription factor TCP16 (TCP16) (Arabidopsis thaliana (Mouse-ear cress)).